Reading from the N-terminus, the 85-residue chain is Phosphocarrier protein HPr (85 aa).

The 85-residue stretch at 1–85 folds into the HPr domain; the sequence is MFQKEIKINA…HLSKIMTELE (85 aa). The active-site Pros-phosphohistidine intermediate is H15.

Belongs to the HPr family.

The protein resides in the cytoplasm. General (non sugar-specific) component of the phosphoenolpyruvate-dependent sugar phosphotransferase system (sugar PTS). This major carbohydrate active-transport system catalyzes the phosphorylation of incoming sugar substrates concomitantly with their translocation across the cell membrane. The phosphoryl group from phosphoenolpyruvate (PEP) is transferred to the phosphoryl carrier protein HPr by enzyme I. Phospho-HPr then transfers it to the PTS EIIA domain. The protein is Phosphocarrier protein HPr (ptsH) of Buchnera aphidicola subsp. Schizaphis graminum (strain Sg).